The following is a 205-amino-acid chain: uncharacterized protein (205 aa).

This is an uncharacterized protein from Orgyia pseudotsugata (Douglas-fir tussock moth).